Consider the following 178-residue polypeptide: Large ribosomal subunit protein uL6 (178 aa).

The protein belongs to the universal ribosomal protein uL6 family. In terms of assembly, part of the 50S ribosomal subunit.

Functionally, this protein binds to the 23S rRNA, and is important in its secondary structure. It is located near the subunit interface in the base of the L7/L12 stalk, and near the tRNA binding site of the peptidyltransferase center. This chain is Large ribosomal subunit protein uL6, found in Streptococcus pyogenes serotype M3 (strain ATCC BAA-595 / MGAS315).